A 287-amino-acid polypeptide reads, in one-letter code: Glucose uptake protein GlcU (287 aa).

The next 8 membrane-spanning stretches (helical) occupy residues leucine 4–glycine 26, alanine 38–valine 60, tryptophan 110–leucine 132, isoleucine 153–valine 175, alanine 180–tyrosine 197, isoleucine 210–glutamine 227, valine 232–leucine 254, and arginine 261–alanine 283.

This sequence belongs to the GRP transporter (TC 2.A.7.5) family.

Its subcellular location is the cell membrane. Functionally, involved in the uptake of glucose. This chain is Glucose uptake protein GlcU (glcU), found in Bacillus subtilis (strain 168).